We begin with the raw amino-acid sequence, 151 residues long: GTP-dependent dephospho-CoA kinase (151 aa).

GTP contacts are provided by D30, V31, D49, K51, and E104.

Belongs to the GTP-dependent DPCK family.

The catalysed reaction is 3'-dephospho-CoA + GTP = GDP + CoA + H(+). Its pathway is cofactor biosynthesis; coenzyme A biosynthesis. Its function is as follows. Catalyzes the GTP-dependent phosphorylation of the 3'-hydroxyl group of dephosphocoenzyme A to form coenzyme A (CoA). The protein is GTP-dependent dephospho-CoA kinase of Cenarchaeum symbiosum (strain A).